The primary structure comprises 329 residues: 4-methyl-2-oxopentanoate reductase A (329 aa).

NAD(+) contacts are provided by residues 162–163 (GI), 240–242 (TAR), and Asp-266. The active site involves Arg-242. The active site involves Glu-271. His-289 (proton donor) is an active-site residue.

It belongs to the D-isomer specific 2-hydroxyacid dehydrogenase family.

The catalysed reaction is (2R)-hydroxy-4-methylpentanoate + NADP(+) = 4-methyl-2-oxopentanoate + NADPH + H(+). It carries out the reaction a (2R)-2-hydroxycarboxylate + NADP(+) = a 2-oxocarboxylate + NADPH + H(+). 4-methyl-2-oxopentanoate (MOA) reductase that reduces MOA, a possible intermediate in leucine synthesis, to D-leucate in a NADPH- or NADH-dependent manner, but with a preference for NADPH. In addition to MOA, shows broad substrate specificity toward 2-keto acids. This chain is 4-methyl-2-oxopentanoate reductase A, found in Aspergillus oryzae (strain ATCC 42149 / RIB 40) (Yellow koji mold).